The sequence spans 1609 residues: Probable cation-transporting ATPase I (1609 aa).

The next 10 helical transmembrane spans lie at 30–50 (GAVN…WPVV), 176–196 (LAIL…SAAV), 238–258 (IALS…GTPL), 357–377 (LIAA…AGAI), 641–661 (VHLA…ASAG), 673–693 (WFSP…VSAS), 778–798 (ILAV…ALLV), 921–941 (LFEG…ATGV), 969–989 (TSKV…LALL), and 997–1017 (AVAD…PLVA). The 4-aspartylphosphate intermediate role is filled by D1053. Residues D1335 and D1339 each coordinate Mg(2+). Helical transmembrane passes span 1396–1416 (ILVG…VFGA) and 1426–1446 (LLLV…VTSQ). A disordered region spans residues 1447–1476 (YEEPGEDEYQTDEEADEARRTHQHEVLTGP). Over residues 1449–1462 (EPGEDEYQTDEEAD) the composition is skewed to acidic residues. 2 helical membrane-spanning segments follow: residues 1542 to 1562 (VVAT…TPVI) and 1573 to 1593 (PIAW…SVLA).

This sequence belongs to the cation transport ATPase (P-type) (TC 3.A.3) family.

The protein localises to the cell membrane. It carries out the reaction ATP + H2O = ADP + phosphate + H(+). This Mycobacterium leprae (strain TN) protein is Probable cation-transporting ATPase I (ctpI).